A 460-amino-acid chain; its full sequence is DNA repair protein RadA (460 aa).

The C4-type zinc finger occupies 11–28; it reads CNECGADYPRWQGQCSAC. 102 to 109 lines the ATP pocket; that stretch reads GNPGAGKS. The RadA KNRFG motif motif lies at 258-262; that stretch reads KNRFG. Residues 357 to 460 form a lon-protease-like region; it reads DVFVNVVGGV…ADALSVFDDL (104 aa).

Belongs to the RecA family. RadA subfamily.

DNA-dependent ATPase involved in processing of recombination intermediates, plays a role in repairing DNA breaks. Stimulates the branch migration of RecA-mediated strand transfer reactions, allowing the 3' invading strand to extend heteroduplex DNA faster. Binds ssDNA in the presence of ADP but not other nucleotides, has ATPase activity that is stimulated by ssDNA and various branched DNA structures, but inhibited by SSB. Does not have RecA's homology-searching function. This Salmonella typhimurium (strain LT2 / SGSC1412 / ATCC 700720) protein is DNA repair protein RadA.